Consider the following 621-residue polypeptide: MGVNAVHWFRKGLRLHDNPALRECIRGADTVRCVYILDPWFAGSSNVGINRWRFLLQCLEDLDANLRKLNSRLFVIRGQPADVFPRLFKEWSIAKLSIEYDSEPFGKERDAAIKKLASEAGVEVIVRISHTLYDLDKIIELNGGQPPLTYKRFQTLISRMEPLEMPVETITPEVMQKCTTPVSDDHDEKYGVPSLEELGFDTDGLPSAVWPGGETEALTRLERHLERKAWVANFERPRMNANSLLASPTGLSPYLRFGCLSCRLFYFKLTDLYKKVKKNSSPPLSLYGQLLWREFFYTAATNNPRFDKMEGNPICVQIPWDKNPEALAKWAEGRTGFPWIDAIMTQLRQEGWIHHLARHAVACFLTRGDLWISWEEGMKVFEELLLDADWSVNAGSWMWLSCSSFFQQFFHCYCPVGFGRRTDPNGDYIRRYLPVLRGFPAKYIYDPWNAPESVQKAAKCVIGVNYPKPMVNHAEASRLNIERMKQIYQQLSRYRGLGLLATVPSNPNGNGNGGLMSFSPGESISGCSSAGGAQLGTGDGQTVGVQTCALGDSHTGGSGVQQQGYCQASSILRYAHGDNQQSHLMQPGRASLGTGISAGKRPNPEEETQSVGPKVQRQSTN.

Positions 3–132 (VNAVHWFRKG…EVIVRISHTL (130 aa)) constitute a Photolyase/cryptochrome alpha/beta domain. Short sequence motifs (LIR) lie at residues 50 to 54 (NRWRF), 82 to 87 (DVFPRL), and 151 to 156 (KRFQTL). FAD is bound at residue S252. 4 consecutive short sequence motifs (LIR) follow at residues 255-260 (LRFGCL), 271-276 (DLYKKV), 285-290 (SLYGQL), and 335-339 (TGFPW). Q289 lines the FAD pocket. H355 provides a ligand contact to FAD. Positions 379–384 (KVFEEL) match the LIR 8 motif. Residue 387–389 (DAD) participates in FAD binding. 5 short sequence motifs (LIR) span residues 395-400 (GSWMWL), 411-416 (HCYCPV), 430-435 (RRYLPV), 486-491 (QIYQQL), and 492-497 (SRYRGL). Residues 581–621 (QSHLMQPGRASLGTGISAGKRPNPEEETQSVGPKVQRQSTN) are disordered.

The protein belongs to the DNA photolyase class-1 family. In terms of assembly, component of the circadian core oscillator, which includes the CRY proteins, CLOCK or NPAS2, BMAL1 or BMAL2, CSNK1E, and the PER proteins. Requires FAD as cofactor. (6R)-5,10-methylene-5,6,7,8-tetrahydrofolate is required as a cofactor. Expressed in the pineal gland.

The protein localises to the cytoplasm. It is found in the nucleus. In terms of biological role, transcriptional repressor which forms a core component of the circadian clock. The circadian clock, an internal time-keeping system, regulates various physiological processes through the generation of approximately 24 hour circadian rhythms in gene expression, which are translated into rhythms in metabolism and behavior. It is derived from the Latin roots 'circa' (about) and 'diem' (day) and acts as an important regulator of a wide array of physiological functions including metabolism, sleep, body temperature, blood pressure, endocrine, immune, cardiovascular, and renal function. Consists of two major components: the central clock, residing in the suprachiasmatic nucleus (SCN) of the brain, and the peripheral clocks that are present in nearly every tissue and organ system. Both the central and peripheral clocks can be reset by environmental cues, also known as Zeitgebers (German for 'timegivers'). The predominant Zeitgeber for the central clock is light, which is sensed by retina and signals directly to the SCN. The central clock entrains the peripheral clocks through neuronal and hormonal signals, body temperature and feeding-related cues, aligning all clocks with the external light/dark cycle. Circadian rhythms allow an organism to achieve temporal homeostasis with its environment at the molecular level by regulating gene expression to create a peak of protein expression once every 24 hours to control when a particular physiological process is most active with respect to the solar day. Transcription and translation of core clock components (CLOCK, NPAS2, BMAL1, BMAL2, PER1, PER2, PER3, CRY1 and CRY2) plays a critical role in rhythm generation, whereas delays imposed by post-translational modifications (PTMs) are important for determining the period (tau) of the rhythms (tau refers to the period of a rhythm and is the length, in time, of one complete cycle). A diurnal rhythm is synchronized with the day/night cycle, while the ultradian and infradian rhythms have a period shorter and longer than 24 hours, respectively. Disruptions in the circadian rhythms contribute to the pathology of cardiovascular diseases, cancer, metabolic syndromes and aging. A transcription/translation feedback loop (TTFL) forms the core of the molecular circadian clock mechanism. Transcription factors, CLOCK or NPAS2 and BMAL1 or BMAL2, form the positive limb of the feedback loop, act in the form of a heterodimer and activate the transcription of core clock genes and clock-controlled genes (involved in key metabolic processes), harboring E-box elements (5'-CACGTG-3') within their promoters. The core clock genes: PER1/2/3 and CRY1/2 which are transcriptional repressors form the negative limb of the feedback loop and interact with the CLOCK|NPAS2-BMAL1|BMAL2 heterodimer inhibiting its activity and thereby negatively regulating their own expression. This heterodimer also activates nuclear receptors NR1D1/2 and RORA/B/G, which form a second feedback loop and which activate and repress BMAL1 transcription, respectively. CRY1 and CRY2 have redundant functions but also differential and selective contributions at least in defining the pace of the SCN circadian clock and its circadian transcriptional outputs. More potent transcriptional repressor in cerebellum and liver than CRY2, though more effective in lengthening the period of the SCN oscillator. On its side, CRY2 seems to play a critical role in tuning SCN circadian period by opposing the action of CRY1. With CRY2, is dispensable for circadian rhythm generation but necessary for the development of intercellular networks for rhythm synchrony. Capable of translocating circadian clock core proteins such as PER proteins to the nucleus. Interacts with CLOCK-BMAL1 independently of PER proteins and is found at CLOCK-BMAL1-bound sites, suggesting that CRY may act as a molecular gatekeeper to maintain CLOCK-BMAL1 in a poised and repressed state until the proper time for transcriptional activation. Represses CLOCK-BMAL1-mediated transcriptional activation. This chain is Cryptochrome-1 (CRY1), found in Gallus gallus (Chicken).